Here is a 277-residue protein sequence, read N- to C-terminus: Large ribosomal subunit protein uL2 (277 aa).

Residues 222 to 277 (GVAMNPVDHPHGGGEGRTSGGRHPVSPWGKSTKGKRTRSNKATDKFIMHTRHQRKK) are disordered.

It belongs to the universal ribosomal protein uL2 family. Part of the 50S ribosomal subunit. Forms a bridge to the 30S subunit in the 70S ribosome.

In terms of biological role, one of the primary rRNA binding proteins. Required for association of the 30S and 50S subunits to form the 70S ribosome, for tRNA binding and peptide bond formation. It has been suggested to have peptidyltransferase activity; this is somewhat controversial. Makes several contacts with the 16S rRNA in the 70S ribosome. This chain is Large ribosomal subunit protein uL2, found in Bartonella quintana (strain Toulouse) (Rochalimaea quintana).